Consider the following 77-residue polypeptide: Putative regulatory protein tsl2331 (77 aa).

This sequence belongs to the RemA family.

The protein is Putative regulatory protein tsl2331 of Thermosynechococcus vestitus (strain NIES-2133 / IAM M-273 / BP-1).